A 621-amino-acid chain; its full sequence is tRNA 5-methylaminomethyl-2-thiouridine biosynthesis bifunctional protein MnmC (621 aa).

The tract at residues Met1–Glu222 is tRNA (mnm(5)s(2)U34)-methyltransferase. The FAD-dependent cmnm(5)s(2)U34 oxidoreductase stretch occupies residues Ile250–Lys621.

The protein in the N-terminal section; belongs to the methyltransferase superfamily. tRNA (mnm(5)s(2)U34)-methyltransferase family. This sequence in the C-terminal section; belongs to the DAO family. Requires FAD as cofactor.

It is found in the cytoplasm. It catalyses the reaction 5-aminomethyl-2-thiouridine(34) in tRNA + S-adenosyl-L-methionine = 5-methylaminomethyl-2-thiouridine(34) in tRNA + S-adenosyl-L-homocysteine + H(+). Functionally, catalyzes the last two steps in the biosynthesis of 5-methylaminomethyl-2-thiouridine (mnm(5)s(2)U) at the wobble position (U34) in tRNA. Catalyzes the FAD-dependent demodification of cmnm(5)s(2)U34 to nm(5)s(2)U34, followed by the transfer of a methyl group from S-adenosyl-L-methionine to nm(5)s(2)U34, to form mnm(5)s(2)U34. The sequence is that of tRNA 5-methylaminomethyl-2-thiouridine biosynthesis bifunctional protein MnmC from Campylobacter concisus (strain 13826).